Consider the following 231-residue polypeptide: Demethylmenaquinone methyltransferase (231 aa).

Residues Thr62, Asp80, 102–103 (DA), and Ser119 contribute to the S-adenosyl-L-methionine site.

Belongs to the class I-like SAM-binding methyltransferase superfamily. MenG/UbiE family.

It catalyses the reaction a 2-demethylmenaquinol + S-adenosyl-L-methionine = a menaquinol + S-adenosyl-L-homocysteine + H(+). It functions in the pathway quinol/quinone metabolism; menaquinone biosynthesis; menaquinol from 1,4-dihydroxy-2-naphthoate: step 2/2. Functionally, methyltransferase required for the conversion of demethylmenaquinol (DMKH2) to menaquinol (MKH2). This Streptomyces avermitilis (strain ATCC 31267 / DSM 46492 / JCM 5070 / NBRC 14893 / NCIMB 12804 / NRRL 8165 / MA-4680) protein is Demethylmenaquinone methyltransferase.